The sequence spans 372 residues: MHNQAPIQRRKSTRIYVGNVPIGDGAPIAVQSMTNTRTTDVEATVNQIKALERVGADIVRVSVPTMDAAEAFKLIKQRVNVPLVADIHFDYRIALKVAEYGVDCLRINPGNIGNEERIRMVVDCARDKNIPIRIGVNAGSLEKDLQEKYGEPTPQALLESAMRHVDHLDRLNFDQFKVSVKASDVFLAVESYRLLAKQIDQPLHLGITEAGGARSGAVKSAIGLGLLLSEGIGDTLRVSLAADPVEEIKVGFDILKSLRIRSRGINFIACPTCSRQEFDVIGTVNALEQRLEDIITPMDVSIIGCVVNGPGEALVSTLGVTGGNKKSGLYEDGVRKDRLDNNDMIDQLEARIRAKASQLDEARRIDVQQVEK.

Residues Cys270, Cys273, Cys305, and Glu312 each coordinate [4Fe-4S] cluster.

Belongs to the IspG family. It depends on [4Fe-4S] cluster as a cofactor.

It carries out the reaction (2E)-4-hydroxy-3-methylbut-2-enyl diphosphate + oxidized [flavodoxin] + H2O + 2 H(+) = 2-C-methyl-D-erythritol 2,4-cyclic diphosphate + reduced [flavodoxin]. Its pathway is isoprenoid biosynthesis; isopentenyl diphosphate biosynthesis via DXP pathway; isopentenyl diphosphate from 1-deoxy-D-xylulose 5-phosphate: step 5/6. Its function is as follows. Converts 2C-methyl-D-erythritol 2,4-cyclodiphosphate (ME-2,4cPP) into 1-hydroxy-2-methyl-2-(E)-butenyl 4-diphosphate. The sequence is that of 4-hydroxy-3-methylbut-2-en-1-yl diphosphate synthase (flavodoxin) from Escherichia coli O9:H4 (strain HS).